The primary structure comprises 59 residues: Preprotein translocase subunit SecG (59 aa).

Residues Met1–Asp33 are Cytoplasmic-facing. The chain crosses the membrane as a helical span at residues Pro34 to Tyr55. At Gly56–Trp59 the chain is on the extracellular side.

The protein belongs to the SEC61-beta family. Component of the protein translocase complex. Heterotrimer consisting of alpha (SecY), beta (SecG) and gamma (SecE) subunits. Can form oligomers of the heterotrimer.

It is found in the cell membrane. In terms of biological role, involved in protein export. The function of the beta subunit is unknown, but it may be involved in stabilization of the trimeric complex. This is Preprotein translocase subunit SecG from Methanocella arvoryzae (strain DSM 22066 / NBRC 105507 / MRE50).